A 258-amino-acid polypeptide reads, in one-letter code: MKVTFGNEYIKNFLGEFIGTFVLMFLGEGTTANHFAVPIKNDWLRLCIGWGLGVFFGILISAKLSGAHLNLAVTVGLSTIKKFNYKQIPLYFAGQLLGALSATASVYGLYYGFVSDQTIPKFSWETGKHANVHIASAFMHEFILTGILLLIILSVTDENICGKFHVLKVSSIVGLAIICIGISFGGNTGFALNPSRDLGARILSAIAYGFEAFTRDKCYFWIPLIAPIIGSIIFCQIYDKIVAPLVVISEHDKGALEI.

The Cytoplasmic segment spans residues 1 to 16 (MKVTFGNEYIKNFLGE). The chain crosses the membrane as a helical span at residues 17–37 (FIGTFVLMFLGEGTTANHFAV). At 38–45 (PIKNDWLR) the chain is on the extracellular side. Residues 46 to 66 (LCIGWGLGVFFGILISAKLSG) form a helical membrane-spanning segment. 2 residues coordinate glycerol: A67 and N70. Topologically, residues 67–87 (AHLNLAVTVGLSTIKKFNYKQ) are cytoplasmic. The helical transmembrane segment at 88-108 (IPLYFAGQLLGALSATASVYG) threads the bilayer. Topologically, residues 109 to 133 (LYYGFVSDQTIPKFSWETGKHANVH) are extracellular. A helical transmembrane segment spans residues 134–154 (IASAFMHEFILTGILLLIILS). Over 155 to 171 (VTDENICGKFHVLKVSS) the chain is Cytoplasmic. A helical transmembrane segment spans residues 172–192 (IVGLAIICIGISFGGNTGFAL). Glycerol is bound by residues G189, F190, N193, and R196. Topologically, residues 193 to 217 (NPSRDLGARILSAIAYGFEAFTRDK) are extracellular. A helical membrane pass occupies residues 218 to 238 (CYFWIPLIAPIIGSIIFCQIY). Over 239-258 (DKIVAPLVVISEHDKGALEI) the chain is Cytoplasmic.

It belongs to the MIP/aquaporin (TC 1.A.8) family.

It localises to the cell membrane. It catalyses the reaction H2O(in) = H2O(out). It carries out the reaction glycerol(in) = glycerol(out). The enzyme catalyses urea(in) = urea(out). In terms of biological role, mediates water and glycerol transport across the cell membrane. Permeable to urea. Required for efficient progression of parasites through the liver stages. This is Aquaglyceroporin from Plasmodium berghei (strain Anka).